The following is a 142-amino-acid chain: Baculoviral IAP repeat-containing protein 5 (142 aa).

The BIR repeat unit spans residues 18-88; it reads RISTFKNWPF…KHSSGCAFLS (71 aa). S20 is modified (phosphoserine; by AURKC). K23 carries the N6-acetyllysine modification. A Phosphothreonine; by CDK1 and CDK15 modification is found at T34. At T48 the chain carries Phosphothreonine. The Zn(2+) site is built by C57, C60, H77, and C84. Residues K90, K110, K112, and K115 each carry the N6-acetyllysine modification. At T117 the chain carries Phosphothreonine; by AURKB. Residue K129 is modified to N6-acetyllysine.

It belongs to the IAP family. In terms of assembly, monomer or homodimer. Exists as a homodimer in the apo state and as a monomer in the CPC-bound state. The monomer protects cells against apoptosis more efficiently than the dimer. Only the dimeric form is capable of enhancing tubulin stability in cells. When phosphorylated, interacts with LAMTOR5/HBXIP; the resulting complex binds pro-CASP9, as well as active CASP9, but much less efficiently. Component of the chromosomal passenger complex (CPC) composed of at least BIRC5/survivin, CDCA8/borealin, INCENP, AURKB or AURKC; in the complex forms a triple-helix bundle-based subcomplex with INCENP and CDCA8. Interacts with JTB. Interacts (via BIR domain) with histone H3 phosphorylated at 'Thr-3' (H3pT3). Interacts with EVI5. Interacts with GTP-bound RAN in both the S and M phases of the cell cycle. Interacts with USP9X. Interacts with tubulin. Interacts with BIRC2/c-IAP1. The acetylated form at Lys-129 interacts with STAT3. The monomeric form deacetylated at Lys-129 interacts with XPO1/CRM1. The monomeric form interacts with XIAP/BIRC4. Both the dimeric and monomeric form can interact with DIABLO/SMAC. Interacts with BIRC6/bruce. Interacts with FBXL7; this interaction facilitates the polyubiquitination and subsequent proteasomal degradation of BIRC5 by the SCF(FBXL7) E3 ubiquitin-protein ligase complex. Ubiquitinated by the Cul9-RING ubiquitin-protein ligase complex, leading to its degradation. Ubiquitination is required for centrosomal targeting. Deubiquitinated by USP35 or USP38; leading to stabilization. Post-translationally, acetylation at Lys-129 results in its homodimerization, while deacetylation promotes the formation of monomers which heterodimerize with XPO1/CRM1 which facilitates its nuclear export. The acetylated form represses STAT3 transactivation. The dynamic equilibrium between its acetylation and deacetylation at Lys-129 determines its interaction with XPO1/CRM1, its subsequent subcellular localization, and its ability to inhibit STAT3 transactivation. In terms of processing, in vitro phosphorylation at Thr-117 by AURKB prevents interaction with INCENP and localization to mitotic chromosomes. Phosphorylation at Thr-48 by CK2 is critical for its mitotic and anti-apoptotic activities. Phosphorylation at Thr-34 by CDK15 is critical for its anti-apoptotic activity. Phosphorylation at Ser-20 by AURKC is critical for regulation of proper chromosome alignment and segregation, and possibly cytokinesis.

Its subcellular location is the cytoplasm. The protein localises to the nucleus. It localises to the chromosome. It is found in the centromere. The protein resides in the cytoskeleton. Its subcellular location is the spindle. The protein localises to the kinetochore. It localises to the midbody. Its function is as follows. Multitasking protein that has dual roles in promoting cell proliferation and preventing apoptosis. Component of a chromosome passage protein complex (CPC) which is essential for chromosome alignment and segregation during mitosis and cytokinesis. Acts as an important regulator of the localization of this complex; directs CPC movement to different locations from the inner centromere during prometaphase to midbody during cytokinesis and participates in the organization of the center spindle by associating with polymerized microtubules. Involved in the recruitment of CPC to centromeres during early mitosis via association with histone H3 phosphorylated at 'Thr-3' (H3pT3) during mitosis. The complex with RAN plays a role in mitotic spindle formation by serving as a physical scaffold to help deliver the RAN effector molecule TPX2 to microtubules. May counteract a default induction of apoptosis in G2/M phase. The acetylated form represses STAT3 transactivation of target gene promoters. May play a role in neoplasia. Inhibitor of CASP3 and CASP7. Essential for the maintenance of mitochondrial integrity and function. The protein is Baculoviral IAP repeat-containing protein 5 (BIRC5) of Sus scrofa (Pig).